The primary structure comprises 475 residues: UDP-N-acetylmuramate--L-alanine ligase (475 aa).

114 to 120 contacts ATP; it reads GTHGKTT.

Belongs to the MurCDEF family.

The protein resides in the cytoplasm. The catalysed reaction is UDP-N-acetyl-alpha-D-muramate + L-alanine + ATP = UDP-N-acetyl-alpha-D-muramoyl-L-alanine + ADP + phosphate + H(+). Its pathway is cell wall biogenesis; peptidoglycan biosynthesis. Functionally, cell wall formation. The polypeptide is UDP-N-acetylmuramate--L-alanine ligase (Bartonella bacilliformis (strain ATCC 35685 / KC583 / Herrer 020/F12,63)).